We begin with the raw amino-acid sequence, 268 residues long: Ribosomal RNA small subunit methyltransferase A (268 aa).

S-adenosyl-L-methionine is bound by residues Asn18, Leu20, Gly45, Glu66, Asp91, and Asn112.

Belongs to the class I-like SAM-binding methyltransferase superfamily. rRNA adenine N(6)-methyltransferase family. RsmA subfamily.

It is found in the cytoplasm. The enzyme catalyses adenosine(1518)/adenosine(1519) in 16S rRNA + 4 S-adenosyl-L-methionine = N(6)-dimethyladenosine(1518)/N(6)-dimethyladenosine(1519) in 16S rRNA + 4 S-adenosyl-L-homocysteine + 4 H(+). Functionally, specifically dimethylates two adjacent adenosines (A1518 and A1519) in the loop of a conserved hairpin near the 3'-end of 16S rRNA in the 30S particle. May play a critical role in biogenesis of 30S subunits. This is Ribosomal RNA small subunit methyltransferase A from Shewanella frigidimarina (strain NCIMB 400).